We begin with the raw amino-acid sequence, 1070 residues long: Duffy receptor gamma form (1070 aa).

Residues 1 to 21 form the signal peptide; that stretch reads MEGKKKRPLFFLLVLLLSHKA. At 22 to 1003 the chain is on the extracellular side; the sequence is NNVLFERMNG…SYECFTKGSS (982 aa). Residues Asn134 and Asn179 are each glycosylated (N-linked (GlcNAc...) asparagine). 2 disulfide bridges follow: Cys214–Cys243 and Cys227–Cys234. Residues 279–281 carry the Cell attachment site motif; the sequence is RGD. Disulfide bonds link Cys296–Cys372, Cys410–Cys427, Cys422–Cys502, and Cys431–Cys500. The interval 518–912 is disordered; sequence VGSGVESKAP…LNNRKLNRDQ (395 aa). Over residues 526–541 the composition is skewed to polar residues; that stretch reads APSSNPINEAVKSSSG. Composition is skewed to basic and acidic residues over residues 544 to 559, 672 to 707, and 714 to 731; these read KVQE…EGEG, GEVH…DDRS, and HTDE…KDTE. A glycan (N-linked (GlcNAc...) asparagine) is linked at Asn676. Positions 732-763 are enriched in polar residues; the sequence is TTGGSTLTPEQNVSVASDNGNVPGSGNKQNEG. An N-linked (GlcNAc...) asparagine glycan is attached at Asn743. Positions 766–776 are enriched in low complexity; the sequence is ALSGAESLESS. Asn785 is a glycosylation site (N-linked (GlcNAc...) asparagine). Over residues 796–807 the composition is skewed to basic and acidic residues; sequence GNEKDFQKHDFM. The segment covering 814 to 863 has biased composition (low complexity); the sequence is DQTSSDHTSSDQTSSDQTSSDQTSSDQTSSDQTSSDQTSSDQTSSDQTID. Residues 864 to 888 show a composition bias toward basic and acidic residues; that stretch reads TEGHHRDNVRNPEIKSSEDMSKGDF. Residues 890–906 show a composition bias toward polar residues; that stretch reads RNSNSNELYSHNNLNNR. Residue Asn936 is glycosylated (N-linked (GlcNAc...) asparagine). A helical membrane pass occupies residues 1004–1025; it reads TGIVYFATGGAFLIILLLFASW. Residues 1026 to 1070 lie on the Cytoplasmic side of the membrane; that stretch reads NAASNDYEEEATFDEFEEYCYNIHRTPQMPNDIEHMQQFTPLDYS.

Its subcellular location is the membrane. Binds to Neu5Gc-sialylated receptors on macaque erythrocytes. The chain is Duffy receptor gamma form from Plasmodium knowlesi.